The chain runs to 693 residues: Glycine--tRNA ligase beta subunit (693 aa).

Positions 65–74 (QPDKSVEKRG) are enriched in basic and acidic residues. The segment at 65 to 84 (QPDKSVEKRGPAVKAAFDDS) is disordered.

The protein belongs to the class-II aminoacyl-tRNA synthetase family. As to quaternary structure, tetramer of two alpha and two beta subunits.

It is found in the cytoplasm. The catalysed reaction is tRNA(Gly) + glycine + ATP = glycyl-tRNA(Gly) + AMP + diphosphate. In Marinobacter nauticus (strain ATCC 700491 / DSM 11845 / VT8) (Marinobacter aquaeolei), this protein is Glycine--tRNA ligase beta subunit.